A 179-amino-acid chain; its full sequence is Small ribosomal subunit protein eS10x (179 aa).

Residues 90–179 (TLKKSAKPGG…AAAPSGSGLP (90 aa)) are disordered. A compositionally biased stretch (basic and acidic residues) spans 108–129 (DRSRGPRHEGGDRPRFGDRDGY). The segment covering 134–144 (RAGGEFGGEKG) has biased composition (gly residues). Residues 145-156 (GAPADYQPSFQG) are compositionally biased toward low complexity. Gly residues predominate over residues 157–167 (SGRGFGRGAGG). A compositionally biased stretch (low complexity) spans 168-179 (YSAAAPSGSGLP).

It belongs to the eukaryotic ribosomal protein eS10 family.

Its subcellular location is the cytoplasm. The protein is Small ribosomal subunit protein eS10x (RPS10C) of Arabidopsis thaliana (Mouse-ear cress).